The following is a 531-amino-acid chain: Ribosomal protein uS12 methylthiotransferase RimO (531 aa).

2 stretches are compositionally biased toward polar residues: residues 1-19 (MPNI…SQPA) and 55-67 (HNQN…SSEV). The segment at 1–77 (MPNISTESVN…VSAASAKTTT (77 aa)) is disordered. Positions 68–77 (VSAASAKTTT) are enriched in low complexity. Positions 88–198 (PKIGFVSLGC…VIRAVALHVP (111 aa)) constitute an MTTase N-terminal domain. The [4Fe-4S] cluster site is built by C97, C133, C162, C236, C240, and C243. A Radical SAM core domain is found at 222–459 (LTPSHYAYLK…MTLQQDISAQ (238 aa)). A TRAM domain is found at 462–531 (QEKIGKTLMV…EYDLFASYKG (70 aa)).

This sequence belongs to the methylthiotransferase family. RimO subfamily. [4Fe-4S] cluster serves as cofactor.

Its subcellular location is the cytoplasm. It carries out the reaction L-aspartate(89)-[ribosomal protein uS12]-hydrogen + (sulfur carrier)-SH + AH2 + 2 S-adenosyl-L-methionine = 3-methylsulfanyl-L-aspartate(89)-[ribosomal protein uS12]-hydrogen + (sulfur carrier)-H + 5'-deoxyadenosine + L-methionine + A + S-adenosyl-L-homocysteine + 2 H(+). In terms of biological role, catalyzes the methylthiolation of an aspartic acid residue of ribosomal protein uS12. In Psychrobacter cryohalolentis (strain ATCC BAA-1226 / DSM 17306 / VKM B-2378 / K5), this protein is Ribosomal protein uS12 methylthiotransferase RimO.